The sequence spans 498 residues: MALPTLPSYWCSQQRLNQQLARQREQEARLRQQWEQNSRYFRMSDICSSKQAEWSSKTSYQRSMHAYQREKMKEEKRRSLEARREKLRQLMQEEQDLLARELEELRLSMNLQERRIREQHGKLKSAKEEQRKLIAEQLLYEHWKKNNPKLREMELDLHQKHVVNSWEMQKEEKKQQEATAEQENKRYENEYERARREALERMKAEEERRQLEDKLQAEALLQQMEELKLKEVEATKLKKEQENLLKQRWELERLEEERKQMEAFRQKAELGRFLRHQYNAQLSRRTQQIQEELEADRRILQALLEKEDESQRLHLARREQVMADVAWMKQAIEEQLQLERAREAELQMLLREEAKEMWEKREAEWARERSARDRLMSEVLTGRQQQIQEKIEQNRRAQEESLKHREQLIRNLEEVRELARREKEESEKLKSARKQELEAQVAERRLQAWEADQQEEEEEEEARRVEQLSDALLQQEAETMAEQGYRPKPYGHPKIAWN.

Residues Cys11–Arg39 adopt a coiled-coil conformation. Residues Lys50 and Lys57 each participate in a glycyl lysine isopeptide (Lys-Gly) (interchain with G-Cter in ubiquitin) cross-link. Coiled coils occupy residues Ala66–Glu136, Val163–Glu353, and Leu380–Thr479. Residues Lys73 to Asn498 are interaction with keratin proteins. The tract at residues Glu167–Asn189 is disordered. Positions Met168–Asn189 are enriched in basic and acidic residues. Residues Lys259–Glu425 form a trichohyalin/plectin homology domain region. The tract at residues Gln447–Asn498 is disordered.

It belongs to the TCHP family. In terms of assembly, interacts specifically with keratin proteins including, KRT5, KRT6A, KRT8, KRT14, KRT16 and KRT18. Interacts with KCTD17. Ubiquitinated. Ubiquitination by the BCR(KCTD17) E3 ubiquitin ligase complex results in proteasomal degradation, and induces ciliogenesis. Expressed at high levels in normal urothelial and breast epithelial cells. Also expressed in the smooth muscle and endothelial cells. Reduced expression seen in advanced bladder and breast carcinomas (at protein level). Ubiquitous. Expressed at highest levels in the heart, skeletal muscle, kidney, liver and testis.

Its subcellular location is the cytoplasm. The protein localises to the cytoskeleton. It localises to the cell membrane. The protein resides in the mitochondrion. It is found in the cell junction. Its subcellular location is the desmosome. The protein localises to the microtubule organizing center. It localises to the centrosome. Tumor suppressor which has the ability to inhibit cell growth and be pro-apoptotic during cell stress. Inhibits cell growth in bladder and prostate cancer cells by a down-regulation of HSPB1 by inhibiting its phosphorylation. May act as a 'capping' or 'branching' protein for keratin filaments in the cell periphery. May regulate K8/K18 filament and desmosome organization mainly at the apical or peripheral regions of simple epithelial cells. Is a negative regulator of ciliogenesis. This is Trichoplein keratin filament-binding protein from Homo sapiens (Human).